Reading from the N-terminus, the 273-residue chain is Putative pyruvate, phosphate dikinase regulatory protein (273 aa).

G149 to T156 is a binding site for ADP.

The protein belongs to the pyruvate, phosphate/water dikinase regulatory protein family. PDRP subfamily.

It carries out the reaction N(tele)-phospho-L-histidyl/L-threonyl-[pyruvate, phosphate dikinase] + ADP = N(tele)-phospho-L-histidyl/O-phospho-L-threonyl-[pyruvate, phosphate dikinase] + AMP + H(+). It catalyses the reaction N(tele)-phospho-L-histidyl/O-phospho-L-threonyl-[pyruvate, phosphate dikinase] + phosphate + H(+) = N(tele)-phospho-L-histidyl/L-threonyl-[pyruvate, phosphate dikinase] + diphosphate. In terms of biological role, bifunctional serine/threonine kinase and phosphorylase involved in the regulation of the pyruvate, phosphate dikinase (PPDK) by catalyzing its phosphorylation/dephosphorylation. The protein is Putative pyruvate, phosphate dikinase regulatory protein of Rickettsia felis (strain ATCC VR-1525 / URRWXCal2) (Rickettsia azadi).